Consider the following 340-residue polypeptide: Beta-hexosaminidase (340 aa).

Substrate is bound by residues Asp60, Arg68, Arg127, and Lys157–His158. His170 serves as the catalytic Proton donor/acceptor. Asp242 acts as the Nucleophile in catalysis.

Belongs to the glycosyl hydrolase 3 family. NagZ subfamily.

The protein resides in the cytoplasm. The catalysed reaction is Hydrolysis of terminal non-reducing N-acetyl-D-hexosamine residues in N-acetyl-beta-D-hexosaminides.. The protein operates within cell wall biogenesis; peptidoglycan recycling. Its function is as follows. Plays a role in peptidoglycan recycling by cleaving the terminal beta-1,4-linked N-acetylglucosamine (GlcNAc) from peptide-linked peptidoglycan fragments, giving rise to free GlcNAc, anhydro-N-acetylmuramic acid and anhydro-N-acetylmuramic acid-linked peptides. The sequence is that of Beta-hexosaminidase from Glaesserella parasuis serovar 5 (strain SH0165) (Haemophilus parasuis).